A 443-amino-acid chain; its full sequence is Threonine/serine transporter TdcC (443 aa).

11 helical membrane-spanning segments follow: residues 22 to 42 (TTWT…FFPI), 44 to 64 (AGFG…PIAF), 97 to 117 (GVVI…IYGV), 140 to 160 (FVAL…KDLM), 163 to 183 (VMSY…LSLI), 207 to 227 (ILVT…FSPI), 261 to 281 (MLMV…LSPA), 319 to 339 (ASII…LGTL), 366 to 386 (ISMI…PNIL), 389 to 409 (IEAM…MYAI), and 423 to 443 (DNVF…YKLF).

The protein belongs to the amino acid/polyamine transporter 2 family. SdaC/TdcC subfamily.

Its subcellular location is the cell inner membrane. It carries out the reaction L-threonine(in) + H(+)(in) = L-threonine(out) + H(+)(out). It catalyses the reaction L-serine(in) + H(+)(in) = L-serine(out) + H(+)(out). In terms of biological role, involved in the import of threonine and serine into the cell, with the concomitant import of a proton (symport system). The protein is Threonine/serine transporter TdcC of Citrobacter koseri (strain ATCC BAA-895 / CDC 4225-83 / SGSC4696).